The sequence spans 435 residues: Glutamyl-tRNA reductase (435 aa).

Substrate is bound by residues 49 to 52, serine 114, 119 to 121, and glutamine 125; these read TCNR and EPQ. The Nucleophile role is filled by cysteine 50. Position 204-209 (204-209) interacts with NADP(+); sequence GAGETI.

Belongs to the glutamyl-tRNA reductase family. Homodimer.

The catalysed reaction is (S)-4-amino-5-oxopentanoate + tRNA(Glu) + NADP(+) = L-glutamyl-tRNA(Glu) + NADPH + H(+). Its pathway is porphyrin-containing compound metabolism; protoporphyrin-IX biosynthesis; 5-aminolevulinate from L-glutamyl-tRNA(Glu): step 1/2. Catalyzes the NADPH-dependent reduction of glutamyl-tRNA(Glu) to glutamate 1-semialdehyde (GSA). The polypeptide is Glutamyl-tRNA reductase (Actinobacillus succinogenes (strain ATCC 55618 / DSM 22257 / CCUG 43843 / 130Z)).